The chain runs to 589 residues: ATP-dependent lipid A-core flippase (589 aa).

5 helical membrane-spanning segments follow: residues 29–49 (LLLV…TGFL), 70–90 (WLPV…YITD), 157–177 (VIGA…TILV), 261–281 (MIGA…ALAG), and 283–303 (LTAG…PGLK). Residues 32–314 (VAALIAALIE…LTNVQNMVQR (283 aa)) enclose the ABC transmembrane type-1 domain. The 237-residue stretch at 346-582 (IEFRDVTARY…GGLYSHLHGM (237 aa)) folds into the ABC transporter domain. An ATP-binding site is contributed by 380–387 (GRSGSGKS).

Belongs to the ABC transporter superfamily. Lipid exporter (TC 3.A.1.106) family. In terms of assembly, homodimer.

Its subcellular location is the cell inner membrane. The catalysed reaction is ATP + H2O + lipid A-core oligosaccharideSide 1 = ADP + phosphate + lipid A-core oligosaccharideSide 2.. In terms of biological role, involved in lipopolysaccharide (LPS) biosynthesis. Translocates lipid A-core from the inner to the outer leaflet of the inner membrane. Transmembrane domains (TMD) form a pore in the inner membrane and the ATP-binding domain (NBD) is responsible for energy generation. The protein is ATP-dependent lipid A-core flippase of Xanthomonas euvesicatoria pv. vesicatoria (strain 85-10) (Xanthomonas campestris pv. vesicatoria).